The primary structure comprises 271 residues: Ubiquitin thioesterase OTUB1 (271 aa).

Residue alanine 2 is modified to N-acetylalanine. Serine 16 bears the Phosphoserine mark. Tyrosine 26 is modified (phosphotyrosine). The OTU domain occupies 80–271 (SYIRKTRPDG…RPGHYDILYK (192 aa)). Residue aspartate 88 is part of the active site. Cysteine 91 functions as the Nucleophile in the catalytic mechanism. 2 ubiquitin-conjugating enzyme E2 binding regions span residues 130-138 (FTEFTIEDF) and 169-177 (DYLVVYLRL). A free ubiquitin binding region spans residues 189 to 195 (FFEHFIE). The segment at 206–213 (QEVEPMCK) is ubiquitin-conjugating enzyme E2 binding. 2 free ubiquitin binding regions span residues 214–221 (ESDHIHII) and 245–251 (NPHVFPE). Histidine 265 is an active-site residue.

Belongs to the peptidase C65 family. Interacts with RNF128. Forms a ternary complex with RNF128 and USP8. Interacts with FUS and RACK1. Interacts with UBE2D1/UBCH5A, UBE2W/UBC16 and UBE2N/UBC13. In terms of processing, phosphorylation at Tyr-26 by SRC and SRMS promotes deubiquitination of RPTOR via a non-catalytic process.

The protein resides in the cytoplasm. It catalyses the reaction Thiol-dependent hydrolysis of ester, thioester, amide, peptide and isopeptide bonds formed by the C-terminal Gly of ubiquitin (a 76-residue protein attached to proteins as an intracellular targeting signal).. With respect to regulation, by free ubiquitin: binding of free ubiquitin triggers conformational changes in the OTU domain and formation of a ubiquitin-binding helix in the N-terminus, promoting binding of the conjugated donor ubiquitin in UBE2N/UBC13 to OTUB1. In terms of biological role, hydrolase that can specifically remove compared to 'Lys-48'-linked conjugated ubiquitin from proteins and plays an important regulatory role at the level of protein turnover by preventing degradation. Regulator of T-cell anergy, a phenomenon that occurs when T-cells are rendered unresponsive to antigen rechallenge and no longer respond to their cognate antigen. Acts via its interaction with RNF128/GRAIL. Surprisingly, it regulates RNF128-mediated ubiquitination, but does not deubiquitinate polyubiquitinated RNF128. Deubiquitinates estrogen receptor alpha (ESR1). Mediates deubiquitination of 'Lys-48'-linked polyubiquitin chains, but not 'Lys-63'-linked polyubiquitin chains. Not able to cleave di-ubiquitin. Also capable of removing NEDD8 from NEDD8 conjugates, but with a much lower preference compared to 'Lys-48'-linked ubiquitin. Its function is as follows. Plays a key non-catalytic role in DNA repair regulation by inhibiting activity of RNF168, an E3 ubiquitin-protein ligase that promotes accumulation of 'Lys-63'-linked histone H2A and H2AX at DNA damage sites. Inhibits RNF168 independently of ubiquitin thioesterase activity by binding and inhibiting UBE2N/UBC13, the E2 partner of RNF168, thereby limiting spreading of 'Lys-63'-linked histone H2A and H2AX marks. Inhibition occurs by binding to free ubiquitin: free ubiquitin acts as an allosteric regulator that increases affinity for UBE2N/UBC13 and disrupts interaction with UBE2V1. The OTUB1-UBE2N/UBC13-free ubiquitin complex adopts a configuration that mimics a cleaved 'Lys48'-linked di-ubiquitin chain. Acts as a regulator of mTORC1 and mTORC2 complexes. When phosphorylated at Tyr-26, acts as an activator of the mTORC1 complex by mediating deubiquitination of RPTOR via a non-catalytic process: acts by binding and inhibiting the activity of the ubiquitin-conjugating enzyme E2 (UBE2D1/UBCH5A, UBE2W/UBC16 and UBE2N/UBC13), thereby preventing ubiquitination of RPTOR. Can also act as an inhibitor of the mTORC1 and mTORC2 complexes in response to amino acids by mediating non-catalytic deubiquitination of DEPTOR. This chain is Ubiquitin thioesterase OTUB1 (Otub1), found in Mus musculus (Mouse).